The chain runs to 409 residues: LysM domain-containing GPI-anchored protein LYP6 (409 aa).

An N-terminal signal peptide occupies residues 1 to 27 (MAGWPAAEAAGALVVAILAAAAGGAAG). 4 cysteine pairs are disulfide-bonded: Cys34–Cys100, Cys40–Cys166, Cys98–Cys164, and Cys100–Cys166. Residues 110–160 (VRYSARPADTLASVADVVFAGLASADQIRTANGLSAEDPDAPLDAGATLVV) form the LysM 1 domain. Asn168 carries N-linked (GlcNAc...) asparagine glycosylation. The region spanning 179-222 (LSYVVRVGDTVQSIAATHATTVTDISNVNAMGSPIVAPGDILAI) is the LysM 2 domain. 2 disulfide bridges follow: Cys227/Cys259 and Cys254/Cys282. An N-linked (GlcNAc...) asparagine glycan is attached at Asn244. Asn291, Asn302, and Asn313 each carry an N-linked (GlcNAc...) asparagine glycan. The disordered stretch occupies residues 353 to 387 (SPAPGAGEAGGDIPGFPGSSNVSPANGPSGSVSQA). Polar residues predominate over residues 370-387 (GSSNVSPANGPSGSVSQA). Ala387 is lipidated: GPI-anchor amidated alanine. The propeptide at 388 to 409 (ASVNRPHQIVALILSVALYFQM) is removed in mature form.

Interacts with LYP4. Interacts with CERK1. Interacts with CEBIP. Expressed in roots and leaves.

The protein resides in the cell membrane. Functionally, functions in innate immunity. Functions as a pattern recognition receptor (PRR), sensing bacterial peptidoglycan (PGN) and fungal chitin at the cell surface. Involved in resistance against the bacterial pathogen Xanthomonas oryzae pv. oryzae (Xoo) and the fungal pathogen Magnaporthe oryzae. Binds PGN and fungal chitin in vitro. Involved in microbe-associated molecular patterns (MAMPs) perception and participates in the activation of defense genes against the bacterial pathogen Xanthomonas oryzae pv. oryzicola (Xoc) or the fungal pathogen Magnaporthe oryzae. This Oryza sativa subsp. japonica (Rice) protein is LysM domain-containing GPI-anchored protein LYP6.